Here is a 473-residue protein sequence, read N- to C-terminus: Presenilin-B (473 aa).

Positions 1-141 (MSSDNNNDPF…PLLNKKEKDD (141 aa)) are disordered. At 1–164 (MSSDNNNDPF…DDEVSLQDFS (164 aa)) the chain is on the cytoplasmic side. Residues 22-46 (RVSTTTSPNRQSINSSPKQSSPKST) are compositionally biased toward polar residues. Positions 54 to 72 (NIILDLNDNNNDNNNTNNY) are enriched in low complexity. A compositionally biased stretch (basic and acidic residues) spans 79 to 89 (VDNKNKFENKD). The chain crosses the membrane as a helical span at residues 165–185 (SMIVSIIIPVSITMMAVVFFV). The Lumenal segment spans residues 186 to 224 (KYLNNQTLYASTLSYTIAGGSSGGGSGADSITGNSFVDS). A glycan (N-linked (GlcNAc...) asparagine) is linked at N190. Residues 225-245 (LIVAGIVLGMIIVTTVAFVLL) traverse the membrane as a helical segment. Topologically, residues 246 to 252 (YKYRCLK) are cytoplasmic. Residues 253–273 (ILYGWLFLSVGMMLGSFGTTF) traverse the membrane as a helical segment. Over 274 to 286 (FQAMLSAANLPLD) the chain is Lumenal. A helical transmembrane segment spans residues 287–307 (YITFAFLIFNFTVCGIIGVFW). Position 308 (Y308) is a topological domain, cytoplasmic. The helical transmembrane segment at 309 to 329 (AHQYVNQLYLVIISVLMAISL) threads the bilayer. Residues 330 to 334 (TRLPQ) lie on the Lumenal side of the membrane. Residues 335–355 (WTIFTLLVIVAIYDLFAVLCP) form a helical membrane-spanning segment. The active site involves D348. Over 356–389 (RGPLKVLVELSQERNENIPALVYETGKGSDSNLK) the chain is Cytoplasmic. Residues 390–410 (LGLGDFIFYSLLISRAALVHM) traverse the membrane as a helical segment. The active site involves D394. The Lumenal portion of the chain corresponds to 411–413 (SCV). A helical transmembrane segment spans residues 414-434 (FSTFIAILTGLFLTLLCLAIF). At 435–442 (KKALPALP) the chain is on the cytoplasmic side. Residues 439 to 441 (PAL) carry the PAL motif. An intramembrane region (helical) is located at residues 443-463 (ISIFLGILFYYLSNNFLTPFI). The Cytoplasmic segment spans residues 464 to 473 (EALTLSQIFV).

It belongs to the peptidase A22A family. In terms of assembly, homodimer. Component of the gamma-secretase complex, a complex composed of a presenilin homodimer, nicastrin, aph1 and pen2.

The protein resides in the endoplasmic reticulum membrane. Its subcellular location is the golgi apparatus membrane. In terms of biological role, probable catalytic subunit of the gamma-secretase complex, an endoprotease complex that catalyzes the intramembrane cleavage of integral membrane proteins such as Notch receptors. Requires the other members of the gamma-secretase complex to have a protease activity. The protein is Presenilin-B (psenB) of Dictyostelium discoideum (Social amoeba).